The chain runs to 189 residues: Ribonuclease M5 (189 aa).

Residues 8 to 91 form the Toprim domain; that stretch reads KEIIVVEGKD…AFLPKEEALA (84 aa). Mg(2+) contacts are provided by E14, D60, and D62.

This sequence belongs to the ribonuclease M5 family. Mg(2+) serves as cofactor.

It is found in the cytoplasm. It carries out the reaction Endonucleolytic cleavage of RNA, removing 21 and 42 nucleotides, respectively, from the 5'- and 3'-termini of a 5S-rRNA precursor.. Required for correct processing of both the 5' and 3' ends of 5S rRNA precursor. Cleaves both sides of a double-stranded region yielding mature 5S rRNA in one step. The protein is Ribonuclease M5 of Bacillus cereus (strain ATCC 14579 / DSM 31 / CCUG 7414 / JCM 2152 / NBRC 15305 / NCIMB 9373 / NCTC 2599 / NRRL B-3711).